A 311-amino-acid chain; its full sequence is Ribosomal RNA small subunit methyltransferase H (311 aa).

S-adenosyl-L-methionine is bound by residues 32-34 (AGH), aspartate 52, phenylalanine 79, aspartate 100, and glutamine 107.

This sequence belongs to the methyltransferase superfamily. RsmH family.

It is found in the cytoplasm. It carries out the reaction cytidine(1402) in 16S rRNA + S-adenosyl-L-methionine = N(4)-methylcytidine(1402) in 16S rRNA + S-adenosyl-L-homocysteine + H(+). In terms of biological role, specifically methylates the N4 position of cytidine in position 1402 (C1402) of 16S rRNA. This Staphylococcus aureus (strain bovine RF122 / ET3-1) protein is Ribosomal RNA small subunit methyltransferase H.